Here is a 626-residue protein sequence, read N- to C-terminus: (+)-3-carene synthase 1, chloroplastic (626 aa).

A chloroplast-targeting transit peptide spans 1-45 (MSLISAVPLASSCVSKSLISSVREHKALRRAIATLQMSRPGKSVA). Mg(2+) contacts are provided by Asp377, Asp381, and Asp529. The short motif at 377–381 (DDMYD) is the DDXXD motif element.

Belongs to the terpene synthase family. Tpsd subfamily. Mg(2+) serves as cofactor. It depends on Mn(2+) as a cofactor.

It is found in the plastid. It localises to the chloroplast. It catalyses the reaction (2E)-geranyl diphosphate = (+)-car-3-ene + diphosphate. The enzyme catalyses (2E)-geranyl diphosphate = terpinolene + diphosphate. Its pathway is terpene metabolism; oleoresin biosynthesis. The protein operates within secondary metabolite biosynthesis; terpenoid biosynthesis. In terms of biological role, monoterpene synthase (TPS) involved in the biosynthesis of monoterpene natural products included in conifer oleoresin secretions and volatile emissions; these compounds contribute to biotic and abiotic stress defense against herbivores and pathogens. Catalyzes the conversion of (2E)-geranyl diphosphate (GPP) to (+)-3-carene and, to a lower extent, to terpinolene. The sequence is that of (+)-3-carene synthase 1, chloroplastic from Pinus banksiana (Jack pine).